The chain runs to 182 residues: MNVRNNTKLITINALLLAIGVILHQITPVLGLPMQPDFAITMLFIIIILNDNFKITMVSGTLMGIFTAMTTKFPGGQLPNVVDKIFTALIVFLFIALIKKSNILGRLSVEKRNNILMAIVLPLGTLVSGILFLGTAKIIVGLPASFSILFLTVVVPSVALNTVIGLVLYRIVEKSLRRASLL.

4 helical membrane-spanning segments follow: residues 10–32, 55–75, 119–141, and 146–168; these read ITIN…VLGL, ITMV…KFPG, IVLP…IIVG, and FSIL…GLVL.

The protein belongs to the vitamin uptake transporter (VUT/ECF) (TC 2.A.88) family. TrpP subfamily.

Its subcellular location is the cell membrane. In terms of biological role, probably involved in tryptophan uptake. The polypeptide is Probable tryptophan transport protein (trpP) (Clostridium perfringens (strain 13 / Type A)).